We begin with the raw amino-acid sequence, 81 residues long: MKTLLLTLLVVTIVCLDLGYTLKCNKLVPLFYKTCPAGKNLCYKMFMVSNLTVPVKRGCIDVCPKNSALVKYVCCNTDRCN.

The signal sequence occupies residues 1–21 (MKTLLLTLLVVTIVCLDLGYT). 4 cysteine pairs are disulfide-bonded: cysteine 24-cysteine 42, cysteine 35-cysteine 59, cysteine 63-cysteine 74, and cysteine 75-cysteine 80.

The protein belongs to the three-finger toxin family. Short-chain subfamily. Type IA cytotoxin sub-subfamily. In terms of assembly, monomer in solution; Homodimer and oligomer in the presence of negatively charged lipids forming a pore with a size ranging between 20 and 30 Angstroms. Expressed by the venom gland.

The protein resides in the secreted. The protein localises to the target cell membrane. Functionally, shows cytolytic activity on many different cells by forming pore in lipid membranes. In vivo, increases heart rate or kills the animal by cardiac arrest. In addition, it binds to heparin with high affinity, interacts with Kv channel-interacting protein 1 (KCNIP1) in a calcium-independent manner, and binds to integrin alpha-V/beta-3 (ITGAV/ITGB3) with moderate affinity. In Naja sputatrix (Malayan spitting cobra), this protein is Cytotoxin 5b.